The primary structure comprises 286 residues: Puff II/9-2 protein (286 aa).

Positions 1-19 (MKQFIVLTVVLLAIQELQG) are cleaved as a signal peptide. A helical region spans residues 61–235 (IDGLKKENNI…EKDLNTLRCE (175 aa)). Asparagine 156 carries N-linked (GlcNAc...) asparagine glycosylation.

This chain is Puff II/9-2 protein (II/9-2), found in Bradysia coprophila (Dark-winged fungus gnat).